The chain runs to 61 residues: uncharacterized protein (61 aa).

2 helical membrane-spanning segments follow: residues 7–24 (FNVF…YKLF) and 29–48 (VSTT…IVGL).

Its subcellular location is the cell membrane. This is an uncharacterized protein from Bacillus subtilis (strain 168).